The sequence spans 422 residues: Protein king tubby 2 (422 aa).

Residues 49-169 form a disordered region; the sequence is PSNPDQIISS…ASGHNDAEGD (121 aa). Over residues 57–81 the composition is skewed to low complexity; that stretch reads SSGSPTTVTATGTTTGSVTTTPTSP.

Belongs to the TUB family.

It localises to the cytoplasm. Its subcellular location is the nucleus. This Culex quinquefasciatus (Southern house mosquito) protein is Protein king tubby 2 (king-tubby2).